The following is a 379-amino-acid chain: Armadillo repeat-containing X-linked protein 3 (379 aa).

Residues 1–6 lie on the Mitochondrial intermembrane side of the membrane; it reads MGYARK. 2 mitochondrion outer membrane (MOM)-targeting sequence regions span residues 1 to 6 and 26 to 37; these read MGYARK and RLTRGRKQNKEK. Residues 7–29 form a helical; Signal-anchor membrane-spanning segment; it reads VGWVTAGLVIGAGACYCIYRLTR. Over 30-379 the chain is Cytoplasmic; that stretch reads GRKQNKEKMA…AEHMFPKSQE (350 aa). 3 positions are modified to phosphoserine: Ser-61, Ser-67, and Ser-72. The tract at residues 89–98 is nuclear localization signal; that stretch reads RARARARARA. A Phosphoserine modification is found at Ser-110. 3 ARM repeats span residues 111–151, 153–192, and 233–272; these read PNSD…NNAA, AFNR…NLSV, and VTNE…NLAE.

Belongs to the eutherian X-chromosome-specific Armcx family. As to quaternary structure, interacts (via ARM domain) with MIRO1, MIRO2 and TRAK2. The interaction with Miro is calcium-dependent. Interacts with SOX10.

It is found in the mitochondrion outer membrane. Its subcellular location is the cytoplasm. The protein resides in the nucleus. Its function is as follows. Regulates mitochondrial aggregation and transport in axons in living neurons. May link mitochondria to the TRAK2-kinesin motor complex via its interaction with Miro and TRAK2. Mitochondrial distribution and dynamics is regulated through ARMCX3 protein degradation, which is promoted by PCK and negatively regulated by WNT1. Enhances the SOX10-mediated transactivation of the neuronal acetylcholine receptor subunit alpha-3 and beta-4 subunit gene promoters. The protein is Armadillo repeat-containing X-linked protein 3 (ARMCX3) of Pongo abelii (Sumatran orangutan).